The primary structure comprises 84 residues: Large ribosomal subunit protein bL27 (84 aa).

Residues 1 to 21 (MAHKKGGGSTKNGRDSNPKYL) are disordered.

Belongs to the bacterial ribosomal protein bL27 family.

This chain is Large ribosomal subunit protein bL27, found in Chlorobium limicola (strain DSM 245 / NBRC 103803 / 6330).